A 346-amino-acid polypeptide reads, in one-letter code: Dihydroorotase (346 aa).

Positions 13 and 15 each coordinate Zn(2+). Substrate-binding positions include 15-17 and Asn-41; that span reads HLR. Positions 99, 136, and 174 each coordinate Zn(2+). Position 99 is an N6-carboxylysine (Lys-99). His-136 contacts substrate. Leu-219 contributes to the substrate binding site. Asp-247 is a Zn(2+) binding site. Asp-247 is a catalytic residue. Substrate is bound by residues His-251 and Ala-263.

This sequence belongs to the metallo-dependent hydrolases superfamily. DHOase family. Class II DHOase subfamily. As to quaternary structure, homodimer. Requires Zn(2+) as cofactor.

The enzyme catalyses (S)-dihydroorotate + H2O = N-carbamoyl-L-aspartate + H(+). Its pathway is pyrimidine metabolism; UMP biosynthesis via de novo pathway; (S)-dihydroorotate from bicarbonate: step 3/3. In terms of biological role, catalyzes the reversible cyclization of carbamoyl aspartate to dihydroorotate. The chain is Dihydroorotase from Rhizobium rhizogenes (strain K84 / ATCC BAA-868) (Agrobacterium radiobacter).